The following is a 278-amino-acid chain: Transmembrane protein 41A-B (278 aa).

An N-terminal signal peptide occupies residues 1-23; sequence MRSIWGLIVLVAAATFYLYLLSA. 5 consecutive transmembrane segments (helical) span residues 78-98, 101-121, 164-184, 191-211, and 230-250; these read GYVFILFCSAYLYKQSFAIPG, FLNMLSGALFGPLHGLIIACT, LFFFLLFLRFFPMTPNWFLNV, IPIPIFFFSILIGLIPYNFIC, and WFTLLQLLLIACVALLPGALI.

It belongs to the TMEM41 family.

It localises to the membrane. This is Transmembrane protein 41A-B from Danio rerio (Zebrafish).